The following is a 301-amino-acid chain: Heme A synthase (301 aa).

Residues 1–5 are Cytoplasmic-facing; that stretch reads MHKKL. Residues 6–26 form a helical membrane-spanning segment; the sequence is AFFSGFVTLGMMLVLIMGGTV. The Extracellular segment spans residues 27-62; that stretch reads TKTDSGDGCGTDWPLCHGKLIPTNPSVETMIEYSHR. C35 and C42 are disulfide-bonded. E58 is a catalytic residue. H61 is a binding site for heme o. The chain crosses the membrane as a helical span at residues 63–83; it reads VVSGIEGLLIIALAIWTFIAV. Residues 84 to 90 lie on the Cytoplasmic side of the membrane; the sequence is KHRVDVK. The chain crosses the membrane as a helical span at residues 91-111; sequence IFAFLAFIFMLIQSIIGAGAV. The Extracellular segment spans residues 112-121; that stretch reads IWQQSDAILA. Residues 122-142 form a helical membrane-spanning segment; sequence LHFGISLVSFASLLILTILLF. H123 contributes to the heme o binding site. The Cytoplasmic segment spans residues 143–158; it reads EGDREHQVVSRRLRSH. The chain crosses the membrane as a helical span at residues 159–179; it reads LYGLSIYTMIVVYTGAYVRHL. At 180–203 the chain is on the extracellular side; sequence GATYACVGWPICEQEVWTFESYVQ. A disulfide bridge connects residues C185 and C191. A helical membrane pass occupies residues 204-224; it reads MGHRVMAGLLVLYTLYVLYLA. A heme b-binding site is contributed by H206. Topologically, residues 225–234 are cytoplasmic; sequence RKEMNRLIER. A helical transmembrane segment spans residues 235-255; it reads GMMASLFFILLQVGTGAWIVL. Over 256-259 the chain is Extracellular; the sequence is GGHA. Residues 260-280 traverse the membrane as a helical segment; it reads TYVPLLHAFLITCYFGILSYL. H266 contacts heme b. At 281-301 the chain is on the cytoplasmic side; that stretch reads SYHAYRSTARQDGAQLKNMNG.

Belongs to the COX15/CtaA family. Type 1 subfamily. In terms of assembly, interacts with CtaB. It depends on heme b as a cofactor.

The protein localises to the cell membrane. The enzyme catalyses Fe(II)-heme o + 2 A + H2O = Fe(II)-heme a + 2 AH2. The protein operates within porphyrin-containing compound metabolism; heme A biosynthesis; heme A from heme O: step 1/1. In terms of biological role, catalyzes the conversion of heme O to heme A by two successive hydroxylations of the methyl group at C8. The first hydroxylation forms heme I, the second hydroxylation results in an unstable dihydroxymethyl group, which spontaneously dehydrates, resulting in the formyl group of heme A. This chain is Heme A synthase, found in Exiguobacterium sp. (strain ATCC BAA-1283 / AT1b).